We begin with the raw amino-acid sequence, 544 residues long: CTP synthase (544 aa).

The segment at 1 to 265 (MARFIFITGG…DEAVLSAFGI (265 aa)) is amidoligase domain. Serine 13 lines the CTP pocket. UTP is bound at residue serine 13. 14–19 (SLGKGL) contacts ATP. Position 54 (tyrosine 54) interacts with L-glutamine. Position 71 (aspartate 71) interacts with ATP. Residues aspartate 71 and glutamate 139 each contribute to the Mg(2+) site. Residues 146 to 148 (DIE), 186 to 191 (KTKPTQ), and lysine 222 each bind CTP. Residues 186 to 191 (KTKPTQ) and lysine 222 each bind UTP. Residues 291–543 (TIGVVGKYVG…IAAALQQSRL (253 aa)) form the Glutamine amidotransferase type-1 domain. Glycine 355 provides a ligand contact to L-glutamine. Cysteine 382 acts as the Nucleophile; for glutamine hydrolysis in catalysis. Residues 383–386 (LGMQ), glutamate 406, and arginine 471 contribute to the L-glutamine site. Active-site residues include histidine 516 and glutamate 518.

The protein belongs to the CTP synthase family. Homotetramer.

The enzyme catalyses UTP + L-glutamine + ATP + H2O = CTP + L-glutamate + ADP + phosphate + 2 H(+). It catalyses the reaction L-glutamine + H2O = L-glutamate + NH4(+). It carries out the reaction UTP + NH4(+) + ATP = CTP + ADP + phosphate + 2 H(+). It participates in pyrimidine metabolism; CTP biosynthesis via de novo pathway; CTP from UDP: step 2/2. Its activity is regulated as follows. Allosterically activated by GTP, when glutamine is the substrate; GTP has no effect on the reaction when ammonia is the substrate. The allosteric effector GTP functions by stabilizing the protein conformation that binds the tetrahedral intermediate(s) formed during glutamine hydrolysis. Inhibited by the product CTP, via allosteric rather than competitive inhibition. Its function is as follows. Catalyzes the ATP-dependent amination of UTP to CTP with either L-glutamine or ammonia as the source of nitrogen. Regulates intracellular CTP levels through interactions with the four ribonucleotide triphosphates. This chain is CTP synthase, found in Rhizorhabdus wittichii (strain DSM 6014 / CCUG 31198 / JCM 15750 / NBRC 105917 / EY 4224 / RW1) (Sphingomonas wittichii).